A 356-amino-acid polypeptide reads, in one-letter code: UDP-N-acetylglucosamine--N-acetylmuramyl-(pentapeptide) pyrophosphoryl-undecaprenol N-acetylglucosamine transferase (356 aa).

Residues Ser198 and Gln289 each coordinate UDP-N-acetyl-alpha-D-glucosamine.

The protein belongs to the glycosyltransferase 28 family. MurG subfamily.

Its subcellular location is the cell membrane. The enzyme catalyses Mur2Ac(oyl-L-Ala-gamma-D-Glu-L-Lys-D-Ala-D-Ala)-di-trans,octa-cis-undecaprenyl diphosphate + UDP-N-acetyl-alpha-D-glucosamine = beta-D-GlcNAc-(1-&gt;4)-Mur2Ac(oyl-L-Ala-gamma-D-Glu-L-Lys-D-Ala-D-Ala)-di-trans,octa-cis-undecaprenyl diphosphate + UDP + H(+). It participates in cell wall biogenesis; peptidoglycan biosynthesis. Its function is as follows. Cell wall formation. Catalyzes the transfer of a GlcNAc subunit on undecaprenyl-pyrophosphoryl-MurNAc-pentapeptide (lipid intermediate I) to form undecaprenyl-pyrophosphoryl-MurNAc-(pentapeptide)GlcNAc (lipid intermediate II). This Streptococcus thermophilus (strain ATCC BAA-491 / LMD-9) protein is UDP-N-acetylglucosamine--N-acetylmuramyl-(pentapeptide) pyrophosphoryl-undecaprenol N-acetylglucosamine transferase.